The following is a 354-amino-acid chain: Isopentenyl-diphosphate delta-isomerase (354 aa).

11–12 (KK) contributes to the substrate binding site. FMN is bound by residues serine 67, 68-70 (SMT), serine 98, and asparagine 126. 98 to 100 (SFK) is a substrate binding site. Glutamine 160 provides a ligand contact to substrate. Position 161 (glutamate 161) interacts with Mg(2+). Residues lysine 192, threonine 222, and 289-290 (AA) each bind FMN.

Belongs to the IPP isomerase type 2 family. Homooctamer. Dimer of tetramers. FMN serves as cofactor. It depends on NADPH as a cofactor. Mg(2+) is required as a cofactor.

It is found in the cytoplasm. The catalysed reaction is isopentenyl diphosphate = dimethylallyl diphosphate. Involved in the biosynthesis of isoprenoids. Catalyzes the 1,3-allylic rearrangement of the homoallylic substrate isopentenyl (IPP) to its allylic isomer, dimethylallyl diphosphate (DMAPP). In Borrelia garinii subsp. bavariensis (strain ATCC BAA-2496 / DSM 23469 / PBi) (Borreliella bavariensis), this protein is Isopentenyl-diphosphate delta-isomerase.